We begin with the raw amino-acid sequence, 388 residues long: Succinate--CoA ligase [ADP-forming] subunit beta (388 aa).

Residues 9–245 (KALLKKYGVS…KSQENERELK (237 aa)) enclose the ATP-grasp domain. Residues Lys-46, 53-55 (GRG), Glu-100, Tyr-103, and Glu-108 each bind ATP. Asn-200 and Asp-214 together coordinate Mg(2+). Residues Asn-265 and 322-324 (GIV) contribute to the substrate site.

This sequence belongs to the succinate/malate CoA ligase beta subunit family. In terms of assembly, heterotetramer of two alpha and two beta subunits. Mg(2+) serves as cofactor.

The enzyme catalyses succinate + ATP + CoA = succinyl-CoA + ADP + phosphate. The catalysed reaction is GTP + succinate + CoA = succinyl-CoA + GDP + phosphate. Its pathway is carbohydrate metabolism; tricarboxylic acid cycle; succinate from succinyl-CoA (ligase route): step 1/1. Its function is as follows. Succinyl-CoA synthetase functions in the citric acid cycle (TCA), coupling the hydrolysis of succinyl-CoA to the synthesis of either ATP or GTP and thus represents the only step of substrate-level phosphorylation in the TCA. The beta subunit provides nucleotide specificity of the enzyme and binds the substrate succinate, while the binding sites for coenzyme A and phosphate are found in the alpha subunit. The sequence is that of Succinate--CoA ligase [ADP-forming] subunit beta from Acinetobacter baylyi (strain ATCC 33305 / BD413 / ADP1).